The following is a 388-amino-acid chain: Succinate--CoA ligase [ADP-forming] subunit beta (388 aa).

The 236-residue stretch at 9–244 folds into the ATP-grasp domain; it reads KQLFAEFGLP…ASQEDAREAH (236 aa). Residues Lys46, 53–55, Glu99, Ser102, and Glu107 contribute to the ATP site; that span reads GRG. Mg(2+) is bound by residues Asn199 and Asp213. Substrate is bound by residues Asn264 and 321–323; that span reads GIV.

The protein belongs to the succinate/malate CoA ligase beta subunit family. As to quaternary structure, heterotetramer of two alpha and two beta subunits. Requires Mg(2+) as cofactor.

The catalysed reaction is succinate + ATP + CoA = succinyl-CoA + ADP + phosphate. It catalyses the reaction GTP + succinate + CoA = succinyl-CoA + GDP + phosphate. It participates in carbohydrate metabolism; tricarboxylic acid cycle; succinate from succinyl-CoA (ligase route): step 1/1. Its function is as follows. Succinyl-CoA synthetase functions in the citric acid cycle (TCA), coupling the hydrolysis of succinyl-CoA to the synthesis of either ATP or GTP and thus represents the only step of substrate-level phosphorylation in the TCA. The beta subunit provides nucleotide specificity of the enzyme and binds the substrate succinate, while the binding sites for coenzyme A and phosphate are found in the alpha subunit. This is Succinate--CoA ligase [ADP-forming] subunit beta from Vibrio cholerae serotype O1 (strain ATCC 39541 / Classical Ogawa 395 / O395).